The chain runs to 169 residues: Ureidoglycolate lyase (169 aa).

Belongs to the ureidoglycolate lyase family. In terms of assembly, homodimer. Ni(2+) is required as a cofactor.

The catalysed reaction is (S)-ureidoglycolate = urea + glyoxylate. Its pathway is nitrogen metabolism; (S)-allantoin degradation. In terms of biological role, catalyzes the catabolism of the allantoin degradation intermediate (S)-ureidoglycolate, generating urea and glyoxylate. Involved in the utilization of allantoin as nitrogen source. The sequence is that of Ureidoglycolate lyase from Brucella melitensis biotype 2 (strain ATCC 23457).